We begin with the raw amino-acid sequence, 71 residues long: Conotoxin Bu25 (71 aa).

The first 21 residues, 1 to 21, serve as a signal peptide directing secretion; it reads MGMRMMVTVFPLVVLATTVVS. The propeptide occupies 22–44; it reads LRSNRASDGRRGIVNKLNDLVPK. R70 bears the Arginine amide mark.

It belongs to the conotoxin A superfamily. Post-translationally, contains 3 disulfide bonds. They are not indicated here, since framework IV presents two different connectivities (I-V, II-III, IV-VI and I-III, II-V, IV-VI). Expressed by the venom duct.

It localises to the secreted. This is Conotoxin Bu25 from Conus bullatus (Bubble cone).